The sequence spans 571 residues: MDTKKEIKNNNFICQIINKDLNENKNLSFYTRFPPEPNGYLHIGHAKSICLNFELASLYKGRCNLRFDDTNPLKENIKYIESIKHDINWLGYKWHGNVRYASEYFLKLYQYAQELIKKGLAYVDHLTKEQIREYRGTLNTPGKNSPYRNRTIQENIELFEKMKKGDFSEGEACLRAKINMSSSSIIMRDPVLYRIIFIKHHQTQNKWCIYPMYDFAHCLSDSIEGITHSLCTLEFQDNKFLYNWILKNTSVKHYPKQYEFSRLNLEFSILSKRKIKILIDKNIIEGWDDPRIPTLSALRRKGYTPSSIKNFCQKIGVTKQNNLIEFSMLEHCIRKELNQTAIRTMAILDPIKIFLYNLDSNYKEEFIVPNHPNNPEMGTHKIIFTNTIYIDRSDFKEKYDKKYKRLKLGEKIRLRYSYIIHAEKIEKDEYGNISNIICYCDLNTLGRKPKDNKNPAVIHWISEKNTLSAEFKLYDQLFNIKNPEQQENFLLYINSKSLIKKFGFIEKKIGEEIQKKISNNNIEIFFQFERIGYFCIDFIDSKKNQLVFNRTVGLRDTWDSKKIKTKNITNN.

The 'HIGH' region motif lies at 35–45 (PEPNGYLHIGH). ATP contacts are provided by residues 36 to 38 (EPN) and 42 to 48 (HIGHAKS). Residues D68 and Y213 each coordinate L-glutamine. ATP contacts are provided by residues T232, 262–263 (RL), and 270–272 (LSK). The short motif at 269-273 (ILSKR) is the 'KMSKS' region element.

It belongs to the class-I aminoacyl-tRNA synthetase family. In terms of assembly, monomer.

The protein localises to the cytoplasm. The catalysed reaction is tRNA(Gln) + L-glutamine + ATP = L-glutaminyl-tRNA(Gln) + AMP + diphosphate. This chain is Glutamine--tRNA ligase, found in Buchnera aphidicola subsp. Acyrthosiphon pisum (strain APS) (Acyrthosiphon pisum symbiotic bacterium).